Reading from the N-terminus, the 333-residue chain is L-asparagine oxygenase (333 aa).

The L-asparagine site is built by glutamate 125 and asparagine 146. Residues histidine 155 and glutamate 157 each contribute to the Fe cation site. The L-asparagine site is built by glutamate 157 and asparagine 158. Histidine 287 contacts Fe cation. Arginine 301 contacts 2-oxoglutarate. L-asparagine is bound at residue arginine 305.

This sequence belongs to the clavaminate synthase family. Fe(2+) is required as a cofactor.

It carries out the reaction L-asparagine + 2-oxoglutarate + O2 = (2S,3S)-3-hydroxyasparagine + succinate + CO2. It participates in antibiotic biosynthesis; calcium-dependent antibiotic biosynthesis. In terms of biological role, catalyzes the 3-hydroxylation of L-asparagine to (2S,3S)-3-hydroxyasparagine. The 3-hydroxylated asparagine produced is incorporated at position 9 during the biosynthesis of the non-ribosomally synthesized calcium-dependent antibiotic (CDA), a 11-residue acidic lipopeptide lactone. Is able to hydroxylate only free L-asparagine, since it hydroxylates neither a CDA analog with unmodified Asn at position 9 nor a peptidyl-carrier-protein (PCP)-bound asparagine. Is not active toward D-asparagine. This Streptomyces coelicolor (strain ATCC BAA-471 / A3(2) / M145) protein is L-asparagine oxygenase (asnO).